The chain runs to 336 residues: Iron-uptake system permease protein FeuC (336 aa).

The next 9 membrane-spanning stretches (helical) occupy residues 7-27 (LFIA…SFSV), 57-77 (VVMA…IQAI), 85-105 (PGIL…MLLF), 120-140 (MPLF…IFAW), 150-170 (IILV…FLSL), 191-211 (ANWT…PILI), 246-266 (VAII…GLIA), 280-300 (YILP…DFAG), and 308-328 (EVPA…YLLF).

The protein belongs to the binding-protein-dependent transport system permease family. FecCD subfamily. In terms of assembly, the complex is composed of one ATP-binding protein (YusV), two transmembrane proteins (FeuB and FeuC) and a solute-binding protein (FeuA).

The protein localises to the cell membrane. Its function is as follows. Involved in the uptake of iron. Probably responsible for the translocation of the substrate across the membrane. Part of the ABC transporter complex FeuABC/YusV involved in import of the catecholate siderophores bacillibactin and enterobactin. The protein is Iron-uptake system permease protein FeuC (feuC) of Bacillus subtilis (strain 168).